Reading from the N-terminus, the 123-residue chain is Large ribosomal subunit protein bL19 (123 aa).

This sequence belongs to the bacterial ribosomal protein bL19 family.

Its function is as follows. This protein is located at the 30S-50S ribosomal subunit interface and may play a role in the structure and function of the aminoacyl-tRNA binding site. This is Large ribosomal subunit protein bL19 from Ureaplasma parvum serovar 3 (strain ATCC 27815 / 27 / NCTC 11736).